Consider the following 328-residue polypeptide: Probable GDP-L-fucose synthase 1 (328 aa).

25–31 (GHRGLVG) lines the NADP(+) pocket. Tyrosine 152 serves as the catalytic Proton donor/acceptor. NADP(+) contacts are provided by residues lysine 156, 179 to 182 (PTNL), and histidine 195. The substrate site is built by arginine 203, tryptophan 218, arginine 225, and aspartate 285.

It belongs to the NAD(P)-dependent epimerase/dehydratase family. Fucose synthase subfamily. As to quaternary structure, homodimer.

The catalysed reaction is GDP-beta-L-fucose + NADP(+) = GDP-4-dehydro-alpha-D-rhamnose + NADPH + H(+). Its pathway is nucleotide-sugar biosynthesis; GDP-L-fucose biosynthesis via de novo pathway; GDP-L-fucose from GDP-alpha-D-mannose: step 2/2. In terms of biological role, catalyzes the two-step NADP-dependent conversion of GDP-4-dehydro-6-deoxy-D-mannose to GDP-fucose, involving an epimerase and a reductase reaction. The polypeptide is Probable GDP-L-fucose synthase 1 (Oryza sativa subsp. japonica (Rice)).